The chain runs to 453 residues: Tubulin delta chain (453 aa).

A GTP-binding site is contributed by 143 to 149; the sequence is AGGTGSG.

Belongs to the tubulin family. As to quaternary structure, found in a complex with TEDC1, TEDC2, TUBE1 and TUBD1.

The protein localises to the nucleus. Its subcellular location is the cytoplasm. It is found in the cytoskeleton. It localises to the microtubule organizing center. The protein resides in the centrosome. The protein localises to the centriole. Its subcellular location is the cell projection. It is found in the cilium. Its function is as follows. Acts as a positive regulator of hedgehog signaling and regulates ciliary function. The sequence is that of Tubulin delta chain (TUBD1) from Macaca fascicularis (Crab-eating macaque).